The sequence spans 275 residues: Gibberellin-regulated protein 14 (275 aa).

The N-terminal stretch at 1–21 is a signal peptide; sequence MALSLLSVFIFFHVFTNVVFA. The interval 34–207 is disordered; the sequence is PTPTLPSPSP…TAPPVKPPTP (174 aa). Positions 36-207 are enriched in pro residues; the sequence is PTLPSPSPAT…TAPPVKPPTP (172 aa).

It belongs to the GASA family. In terms of processing, six disulfide bonds may be present. As to expression, expressed in flower abscission zone, style, stamen filaments and lateral roots.

The protein resides in the secreted. In terms of biological role, gibberellin-regulated protein that may function in hormonal controlled steps of development such as seed germination, flowering and seed maturation. This chain is Gibberellin-regulated protein 14 (GASA14), found in Arabidopsis thaliana (Mouse-ear cress).